The following is a 247-amino-acid chain: Anionic trypsin (247 aa).

Positions 1-15 (MHPLLILAFVGAAVA) are cleaved as a signal peptide. The propeptide at 16–23 (FPSDDDDK) is activation peptide. A Peptidase S1 domain is found at 24–244 (IVGGYTCAEN…YVDWIQETIA (221 aa)). 6 cysteine pairs are disulfide-bonded: Cys30-Cys160, Cys48-Cys64, Cys132-Cys233, Cys139-Cys206, Cys171-Cys185, and Cys196-Cys220. The Charge relay system role is filled by His63. Positions 75, 77, 80, and 85 each coordinate Ca(2+). Asp107 serves as the catalytic Charge relay system. Ser200 (charge relay system) is an active-site residue.

The protein belongs to the peptidase S1 family. Requires Ca(2+) as cofactor. Not sulfated on tyrosine residue(s).

The protein resides in the secreted. It localises to the extracellular space. It catalyses the reaction Preferential cleavage: Arg-|-Xaa, Lys-|-Xaa.. This Bos taurus (Bovine) protein is Anionic trypsin.